Reading from the N-terminus, the 119-residue chain is ATP-dependent Clp protease adapter protein ClpS (119 aa).

Positions 1-33 (MATRIPKTPSTPPAQKPAGDDGDSVVLERRPQK) are disordered.

Belongs to the ClpS family. Binds to the N-terminal domain of the chaperone ClpA.

Involved in the modulation of the specificity of the ClpAP-mediated ATP-dependent protein degradation. This Variovorax paradoxus (strain S110) protein is ATP-dependent Clp protease adapter protein ClpS.